The sequence spans 328 residues: D-cysteine desulfhydrase (328 aa).

K51 carries the N6-(pyridoxal phosphate)lysine modification.

It belongs to the ACC deaminase/D-cysteine desulfhydrase family. As to quaternary structure, homodimer. It depends on pyridoxal 5'-phosphate as a cofactor.

It carries out the reaction D-cysteine + H2O = hydrogen sulfide + pyruvate + NH4(+) + H(+). Functionally, catalyzes the alpha,beta-elimination reaction of D-cysteine and of several D-cysteine derivatives. It could be a defense mechanism against D-cysteine. This Klebsiella pneumoniae subsp. pneumoniae (strain ATCC 700721 / MGH 78578) protein is D-cysteine desulfhydrase.